We begin with the raw amino-acid sequence, 331 residues long: Dof zinc finger protein DOF1.1 (331 aa).

Residues 77 to 131 form a Dof-type zinc finger; sequence LKCPRCDSSNTKFCYYNNYNLTQPRHFCKGCRRYWTQGGALRNVPVGGGCRRNNK. Zn(2+) contacts are provided by Cys79, Cys82, Cys104, and Cys107. 2 disordered regions span residues 121 to 166 and 291 to 331; these read PVGG…TNHQ and EEQP…NDLL. Residues 135–160 are compositionally biased toward low complexity; it reads NGNLKSSSSSSKQSSSVNAQSPSSGQ. The segment covering 305–316 has biased composition (polar residues); that stretch reads GLTSPGNQTNQY.

Interacts with OBF4. In terms of tissue distribution, expressed in the vasculature (mainly in the phloem and associated cell files) of cotyledons, leaves, roots, flower stalks and petals. The PEAR proteins (e.g. DOF2.4, DOF5.1, DOF3.2, DOF1.1, DOF5.6 and DOF5.3) form a short-range concentration gradient that peaks at protophloem sieve elements (PSE).

Its subcellular location is the nucleus. Its function is as follows. Transcription factor that binds specifically to a 5'-AA[AG]G-3' consensus core sequence. Enhances the DNA binding of OBF transcription factors to OCS elements. Involved in the regulation of root development. The PEAR proteins (e.g. DOF2.4, DOF5.1, DOF3.2, DOF1.1, DOF5.6 and DOF5.3) activate gene expression that promotes radial growth of protophloem sieve elements. Element of a regulatory network controlling indole glucosinolates (IGS) biosynthesis, probably by inducing the expression of accurate genes (e.g. CYP83B1). Promotes apical dominance. This is Dof zinc finger protein DOF1.1 from Arabidopsis thaliana (Mouse-ear cress).